The following is a 258-amino-acid chain: MLAKRIIPCLDIHNGQVIKGMQFRNHKVIGDIVPMAQRYAKEGADELVFYDITASSEGRVVDKSWIARVAEVIDIPFCVAGGIKSVAQAGEVISFGADKISINSPALNDPYLISRLADRFGVQCIVASIDTWYDIQLDRYQVNQYTGDENRTKVTNWQTLDWVQEVQKLGAGEIVLNMMNQDGVCRGYDLQQLRLVRQTCHVPLIASGGAGTMQHFQEALINAEVDGVLAASVFHKNIINILELKKFLAREGVEIRLC.

Active-site residues include D11 and D130.

The protein belongs to the HisA/HisF family. Heterodimer of HisH and HisF.

It is found in the cytoplasm. The catalysed reaction is 5-[(5-phospho-1-deoxy-D-ribulos-1-ylimino)methylamino]-1-(5-phospho-beta-D-ribosyl)imidazole-4-carboxamide + L-glutamine = D-erythro-1-(imidazol-4-yl)glycerol 3-phosphate + 5-amino-1-(5-phospho-beta-D-ribosyl)imidazole-4-carboxamide + L-glutamate + H(+). It functions in the pathway amino-acid biosynthesis; L-histidine biosynthesis; L-histidine from 5-phospho-alpha-D-ribose 1-diphosphate: step 5/9. In terms of biological role, IGPS catalyzes the conversion of PRFAR and glutamine to IGP, AICAR and glutamate. The HisF subunit catalyzes the cyclization activity that produces IGP and AICAR from PRFAR using the ammonia provided by the HisH subunit. This Baumannia cicadellinicola subsp. Homalodisca coagulata protein is Imidazole glycerol phosphate synthase subunit HisF.